The chain runs to 1123 residues: Telomerase reverse transcriptase (1123 aa).

Residues 1-230 (MPRAPRCRAV…ARRRRGSPGS (230 aa)) form an RNA-interacting domain 1 region. The GQ motif stretch occupies residues 58 to 197 (VPWGARPPPA…APGLPGLPGL (140 aa)). A required for regulating specificity for telomeric DNA and for processivity for primer elongation region spans residues 137 to 141 (WGLLL). Residues 202-311 (AGAGASADLR…GVPHDPAHPE (110 aa)) form a disordered region. Positions 222–240 (RRRRGSPGSGVPLAKRPRR) match the Bipartite nuclear localization signal motif. Residue serine 227 is modified to Phosphoserine; by PKB/AKT1. Residues 231-308 (GVPLAKRPRR…GPQGVPHDPA (78 aa)) form a linker region. Over residues 260–279 (PPVSEAPAVTPAVAASPAAS) the composition is skewed to low complexity. The segment at 309–539 (HPETKRFLYC…LARFLVLVDG (231 aa)) is RNA-interacting domain 2. The TFLY; involved in RNA binding motif lies at 312–317 (TKRFLY). The segment at 360–510 (ARRMRRLPAR…MKVRDCTWLH (151 aa)) is QFP motif. The tract at residues 381-401 (LGNHARCPYRALLRTHCPLRA) is CP motif. Serine 446 carries the post-translational modification Phosphoserine; by DYRK2. The Reverse transcriptase domain maps to 595–926 (EVRRHREARP…CLFPWCGLLL (332 aa)). Phosphotyrosine; by SRC-type Tyr-kinases is present on tyrosine 697. The Mg(2+) site is built by aspartate 702, aspartate 859, and aspartate 860. Positions 905 to 919 (LGSAAPLQLPAHCLF) are required for oligomerization. Residues 921–925 (WCGLL) form a primer grip sequence region. A CTE region spans residues 927–1123 (DTRTLEVSCD…LTADFKTILD (197 aa)).

Belongs to the reverse transcriptase family. Telomerase subfamily. Catalytic component of the telomerase holoenzyme complex composed of one molecule of TERT, one molecule of WRAP53/TCAB1, two molecules of H/ACA ribonucleoprotein complex subunits DKC1, NOP10, NHP2 and GAR1, and a telomerase RNA template component (TERC). The telomerase holoenzyme complex is associated with TEP1, SMG6/EST1A and POT1. The molecular chaperone HSP90/P23 complex is required for correct assembly and stabilization of the active telomerase. Interacts directly with HSP90A and PTGES3. Interacts with HSPA1A; the interaction occurs in the absence of TERC and dissociates once the complex has formed. Interacts with RAN; the interaction promotes nuclear export of TERT. Interacts with XPO1. Interacts with PTPN11; the interaction retains TERT in the nucleus. Interacts with NCL (via RRM1 and C-terminal RRM4/Arg/Gly-rich domains); the interaction is important for nucleolar localization of TERT. Interacts with SMARCA4 (via the bromodomain); the interaction regulates Wnt-mediated signaling. Interacts with MCRS1 (isoform MCRS2); the interaction inhibits in vitro telomerase activity. Interacts with PIF1; the interaction has no effect on the elongation activity of TERT. Interacts with PML; the interaction recruits TERT to PML bodies and inhibits telomerase activity. Interacts with GNL3L. Interacts with isoform 1 and isoform 2 of NVL. Interacts with DHX36. Interacts with ATF7. Phosphorylation at Tyr-697 under oxidative stress leads to translocation of TERT to the cytoplasm and reduces its antiapoptotic activity. Dephosphorylated by SHP2/PTPN11 leading to nuclear retention. Phosphorylation at Ser-227 by the AKT pathway promotes nuclear location. Phosphorylation at the G2/M phase at Ser-446 by DYRK2 promotes ubiquitination by the EDVP complex and degradation. In terms of processing, ubiquitinated by the EDVP complex, a E3 ligase complex following phosphorylation at Ser-446 by DYRK2. Ubiquitinated leads to proteasomal degradation.

The protein resides in the nucleus. Its subcellular location is the nucleolus. It localises to the nucleoplasm. It is found in the chromosome. The protein localises to the telomere. The protein resides in the cytoplasm. Its subcellular location is the PML body. The catalysed reaction is DNA(n) + a 2'-deoxyribonucleoside 5'-triphosphate = DNA(n+1) + diphosphate. In terms of biological role, telomerase is a ribonucleoprotein enzyme essential for the replication of chromosome termini in most eukaryotes. Active in progenitor and cancer cells. Inactive, or very low activity, in normal somatic cells. Catalytic component of the teleromerase holoenzyme complex whose main activity is the elongation of telomeres by acting as a reverse transcriptase that adds simple sequence repeats to chromosome ends by copying a template sequence within the RNA component of the enzyme. Catalyzes the RNA-dependent extension of 3'-chromosomal termini with the 6-nucleotide telomeric repeat unit, 5'-TTAGGG-3'. The catalytic cycle involves primer binding, primer extension and release of product once the template boundary has been reached or nascent product translocation followed by further extension. More active on substrates containing 2 or 3 telomeric repeats. Telomerase activity is regulated by a number of factors including telomerase complex-associated proteins, chaperones and polypeptide modifiers. Modulates Wnt signaling. Plays important roles in aging and antiapoptosis. This chain is Telomerase reverse transcriptase (TERT), found in Canis lupus familiaris (Dog).